The chain runs to 298 residues: MKVLWAALVVTLLAGCQADVEPELEVQEPAVWQSGQPWELALGRFWDYLRWVQTLSEQVQEELLSSHVTQELTLLMEDTMKEVKAYKSELEQELAPMAEDTKARLSKELQAAQSRLRADMEEVLNRLSQYRGEVQTMMGQSGEELRARLAAHLRKLRKRLLRDVEEVQKRMDVYRAGAQEGAERSVSAIRERMGSLVEEGRLQSLPSQPLRERAQAWGEQMRGRLEKVGSQARDRLEEVREQMEEVRGKVEEQAEAFQARFKSWFEPMMEDMRRQWADLIEKVQVAVGASTAAPSQKS.

The N-terminal stretch at 1–18 (MKVLWAALVVTLLAGCQA) is a signal peptide. 6 consecutive repeat copies span residues 74–95 (LLMEDTMKEVKAYKSELEQELA), 96–117 (PMAEDTKARLSKELQAAQSRLR), 118–139 (ADMEEVLNRLSQYRGEVQTMMG), 140–161 (QSGEELRARLAAHLRKLRKRLL), 162–183 (RDVEEVQKRMDVYRAGAQEGAE), and 223–244 (GRLEKVGSQARDRLEEVREQME). Positions 74–244 (LLMEDTMKEV…RLEEVREQME (171 aa)) are 8 X 22 AA approximate tandem repeats. M137 carries the methionine sulfoxide modification. S141 is modified (phosphoserine). Positions 152–162 (HLRKLRKRLLR) are LDL and other lipoprotein receptors binding. 156-159 (LRKR) serves as a coordination point for heparin. Positions 204-272 (SLPSQPLRER…SWFEPMMEDM (69 aa)) are lipid-binding and lipoprotein association. 218–225 (GEQMRGRL) is a heparin binding site. Residues 260 to 272 (RFKSWFEPMMEDM) are specificity for association with VLDL.

This sequence belongs to the apolipoprotein A1/A4/E family. Homotetramer. May interact with ABCA1; functionally associated with ABCA1 in the biogenesis of HDLs. May interact with APP/A4 amyloid-beta peptide; the interaction is extremely stable in vitro but its physiological significance is unclear. May interact with MAPT. May interact with MAP2. In the cerebrospinal fluid, interacts with secreted SORL1. Interacts with PMEL; this allows the loading of PMEL luminal fragment on ILVs to induce fibril nucleation. APOE exists as multiple glycosylated and sialylated glycoforms within cells and in plasma. The extent of glycosylation and sialylation are tissue and context specific. In terms of processing, glycated in plasma VLDL. Post-translationally, phosphorylated by FAM20C in the extracellular medium.

Its subcellular location is the secreted. The protein resides in the extracellular space. It localises to the extracellular matrix. The protein localises to the extracellular vesicle. It is found in the endosome. Its subcellular location is the multivesicular body. Its function is as follows. APOE is an apolipoprotein, a protein associating with lipid particles, that mainly functions in lipoprotein-mediated lipid transport between organs via the plasma and interstitial fluids. APOE is a core component of plasma lipoproteins and is involved in their production, conversion and clearance. Apolipoproteins are amphipathic molecules that interact both with lipids of the lipoprotein particle core and the aqueous environment of the plasma. As such, APOE associates with chylomicrons, chylomicron remnants, very low density lipoproteins (VLDL) and intermediate density lipoproteins (IDL) but shows a preferential binding to high-density lipoproteins (HDL). It also binds a wide range of cellular receptors including the LDL receptor/LDLR, the LDL receptor-related proteins LRP1, LRP2 and LRP8 and the very low-density lipoprotein receptor/VLDLR that mediate the cellular uptake of the APOE-containing lipoprotein particles. Finally, APOE also has a heparin-binding activity and binds heparan-sulfate proteoglycans on the surface of cells, a property that supports the capture and the receptor-mediated uptake of APOE-containing lipoproteins by cells. A main function of APOE is to mediate lipoprotein clearance through the uptake of chylomicrons, VLDLs, and HDLs by hepatocytes. APOE is also involved in the biosynthesis by the liver of VLDLs as well as their uptake by peripheral tissues ensuring the delivery of triglycerides and energy storage in muscle, heart and adipose tissues. By participating in the lipoprotein-mediated distribution of lipids among tissues, APOE plays a critical role in plasma and tissues lipid homeostasis. APOE is also involved in two steps of reverse cholesterol transport, the HDLs-mediated transport of cholesterol from peripheral tissues to the liver, and thereby plays an important role in cholesterol homeostasis. First, it is functionally associated with ABCA1 in the biogenesis of HDLs in tissues. Second, it is enriched in circulating HDLs and mediates their uptake by hepatocytes. APOE also plays an important role in lipid transport in the central nervous system, regulating neuron survival and sprouting. This is Apolipoprotein E (APOE) from Dasyprocta punctata (Central American agouti).